We begin with the raw amino-acid sequence, 507 residues long: MQEKIIILDFGSQTTQLIGRRVRELDTYCEIVPYNKFPKEDPTIKGVILSGSPFSVYDKDAFKVDLSEIRGKYPILGICYGAQFMAYTNNGKVEPAGTREYGRAHLTSFCKDNVLFKGVRENTQVWMSHGDTITAIPDNFKKIASTDKVDIAAYQVEGEKVWGVQFHPEVFHSEDGTQILRNFVVDVCGCKQDWSPASFIESTVAELKAQLGDDKVVLGLSGGVDSSVAAVLLNRAIGKNLTCIFVDHGMLRKNEFKNVMNDYECLGLNVIGVDASEKFFAELAGVTEPERKRKIIGKGFIDVFDVEAHKIKDVKWLAQGTIYPDCIESLSITGTVIKSHHNVGGLPEKMHLKLCEPLRLLFKDEVRRVGRELGMPEHLITRHPFPGPGLAVRILGDITREKVRILQDADDIYIQGLRDWGLYDQVWQAGVILLPVQSVGVMGDERTYERAVALRAVTSTDAMTADWAHLPYEFLGKISNDIINKVKGVNRVTYDISSKPPATIEWE.

Residues 4 to 193 enclose the Glutamine amidotransferase type-1 domain; that stretch reads KIIILDFGSQ…VVDVCGCKQD (190 aa). Catalysis depends on Cys-79, which acts as the Nucleophile. Active-site residues include His-167 and Glu-169. One can recognise a GMPS ATP-PPase domain in the interval 194–382; the sequence is WSPASFIEST…LGMPEHLITR (189 aa). 221–227 provides a ligand contact to ATP; the sequence is SGGVDSS.

In terms of assembly, homodimer.

The catalysed reaction is XMP + L-glutamine + ATP + H2O = GMP + L-glutamate + AMP + diphosphate + 2 H(+). Its pathway is purine metabolism; GMP biosynthesis; GMP from XMP (L-Gln route): step 1/1. Functionally, catalyzes the synthesis of GMP from XMP. The protein is GMP synthase [glutamine-hydrolyzing] 1 (guaA1) of Bacteroides thetaiotaomicron (strain ATCC 29148 / DSM 2079 / JCM 5827 / CCUG 10774 / NCTC 10582 / VPI-5482 / E50).